The primary structure comprises 225 residues: GTP-binding nuclear protein Ran (225 aa).

The Small GTPase Ran-type domain maps to 8-172 (VVAEFKLVLV…LWILRKLTGD (165 aa)). 19-26 (DGGVGKTT) is a binding site for GTP. The interval 38–46 (KRYIATQGV) is switch-I. GTP contacts are provided by residues Gly-69, 123–126 (NKVD), and 151–153 (SAK). Positions 69–85 (GQEKLGGLREGYYIGAN) are switch-II.

The protein belongs to the small GTPase superfamily. Ran family. Monomer. Found in a nuclear export complex with RanGTP, exportin and pre-miRNA.

The protein resides in the nucleus. In terms of biological role, GTP-binding protein involved in nucleocytoplasmic transport. Required for the import of protein into the nucleus and also for RNA export. Involved in chromatin condensation and control of cell cycle. The protein is GTP-binding nuclear protein Ran of Tetrahymena thermophila.